Here is a 173-residue protein sequence, read N- to C-terminus: RNA pyrophosphohydrolase (173 aa).

Residues 6 to 149 (GFRANVGIII…KRDVYRKVMK (144 aa)) form the Nudix hydrolase domain. A Nudix box motif is present at residues 38–59 (GGVDDGESAEEAMYRELYEEVG).

This sequence belongs to the Nudix hydrolase family. RppH subfamily. A divalent metal cation serves as cofactor.

Its function is as follows. Accelerates the degradation of transcripts by removing pyrophosphate from the 5'-end of triphosphorylated RNA, leading to a more labile monophosphorylated state that can stimulate subsequent ribonuclease cleavage. The protein is RNA pyrophosphohydrolase of Shewanella pealeana (strain ATCC 700345 / ANG-SQ1).